The chain runs to 473 residues: Photosystem II CP43 reaction center protein (473 aa).

Positions 1-14 (MKTLYSLRRFYPVE) are excised as a propeptide. Thr-15 is subject to N-acetylthreonine. At Thr-15 the chain carries Phosphothreonine. Helical transmembrane passes span 69–93 (LFEV…PHLA), 134–155 (LLGP…KDRN), 178–200 (KALY…RKIT), 255–275 (KPFA…LSYS), and 291–312 (WFNN…ASQA). Glu-367 serves as a coordination point for [CaMn4O5] cluster. Residues 447 to 471 (RARAAAAGFEKGIDRDFEPVLSMTP) traverse the membrane as a helical segment.

This sequence belongs to the PsbB/PsbC family. PsbC subfamily. PSII is composed of 1 copy each of membrane proteins PsbA, PsbB, PsbC, PsbD, PsbE, PsbF, PsbH, PsbI, PsbJ, PsbK, PsbL, PsbM, PsbT, PsbX, PsbY, PsbZ, Psb30/Ycf12, at least 3 peripheral proteins of the oxygen-evolving complex and a large number of cofactors. It forms dimeric complexes. Binds multiple chlorophylls and provides some of the ligands for the Ca-4Mn-5O cluster of the oxygen-evolving complex. It may also provide a ligand for a Cl- that is required for oxygen evolution. PSII binds additional chlorophylls, carotenoids and specific lipids. is required as a cofactor.

Its subcellular location is the plastid. The protein localises to the chloroplast thylakoid membrane. In terms of biological role, one of the components of the core complex of photosystem II (PSII). It binds chlorophyll and helps catalyze the primary light-induced photochemical processes of PSII. PSII is a light-driven water:plastoquinone oxidoreductase, using light energy to abstract electrons from H(2)O, generating O(2) and a proton gradient subsequently used for ATP formation. The sequence is that of Photosystem II CP43 reaction center protein from Amborella trichopoda.